Here is a 584-residue protein sequence, read N- to C-terminus: 2-succinyl-5-enolpyruvyl-6-hydroxy-3-cyclohexene-1-carboxylate synthase (584 aa).

Residues 563 to 584 form a disordered region; it reads TDAEASHRERERLADRVTGLSV. Residues 566–577 show a composition bias toward basic and acidic residues; sequence EASHRERERLAD.

The protein belongs to the TPP enzyme family. MenD subfamily. As to quaternary structure, homodimer. Mg(2+) is required as a cofactor. Requires Mn(2+) as cofactor. The cofactor is thiamine diphosphate.

The enzyme catalyses isochorismate + 2-oxoglutarate + H(+) = 5-enolpyruvoyl-6-hydroxy-2-succinyl-cyclohex-3-ene-1-carboxylate + CO2. It functions in the pathway quinol/quinone metabolism; 1,4-dihydroxy-2-naphthoate biosynthesis; 1,4-dihydroxy-2-naphthoate from chorismate: step 2/7. It participates in quinol/quinone metabolism; menaquinone biosynthesis. In terms of biological role, catalyzes the thiamine diphosphate-dependent decarboxylation of 2-oxoglutarate and the subsequent addition of the resulting succinic semialdehyde-thiamine pyrophosphate anion to isochorismate to yield 2-succinyl-5-enolpyruvyl-6-hydroxy-3-cyclohexene-1-carboxylate (SEPHCHC). In Halobacterium salinarum (strain ATCC 29341 / DSM 671 / R1), this protein is 2-succinyl-5-enolpyruvyl-6-hydroxy-3-cyclohexene-1-carboxylate synthase.